Reading from the N-terminus, the 357-residue chain is Sorbitol dehydrogenase 2 (357 aa).

Position 43 (cysteine 43) interacts with Zn(2+). Substrate is bound at residue tyrosine 49. Zn(2+) contacts are provided by histidine 68 and glutamate 69. Residue glutamate 154 coordinates substrate. Residues aspartate 202, lysine 207, 275-277 (VGM), and 299-301 (CFR) contribute to the NAD(+) site. Positions 301 and 302 each coordinate substrate.

It belongs to the zinc-containing alcohol dehydrogenase family. Homotetramer. Zn(2+) serves as cofactor.

It carries out the reaction keto-D-fructose + NADH + H(+) = D-sorbitol + NAD(+). The enzyme catalyses xylitol + NAD(+) = D-xylulose + NADH + H(+). Polyol dehydrogenase that catalyzes the reversible NAD(+)-dependent oxidation of various sugar alcohols. Is active with D-sorbitol (D-glucitol) and xylitol as substrates, leading to the C2-oxidized product D-fructose and D-xylulose, respectively. This Saccharomyces cerevisiae (strain ATCC 204508 / S288c) (Baker's yeast) protein is Sorbitol dehydrogenase 2 (SOR2).